We begin with the raw amino-acid sequence, 279 residues long: Ankyrin repeat domain-containing protein 7 (279 aa).

Residues 1-11 show a composition bias toward basic residues; it reads MKKFFPFRGKR. Positions 1 to 25 are disordered; the sequence is MKKFFPFRGKRKTDDSHSHSSEVPI. ANK repeat units follow at residues 80–109, 113–142, 146–175, 179–208, and 212–241; these read RSRT…KINV, ENRT…DPNL, YSNT…NLEA, DGHT…DVNA, and NHRT…DLAH.

The polypeptide is Ankyrin repeat domain-containing protein 7 (Ankrd7) (Mus musculus (Mouse)).